The following is a 504-amino-acid chain: Facilitated trehalose transporter Tret1 (504 aa).

Residues M1–Y39 lie on the Cytoplasmic side of the membrane. Residues I40–A60 traverse the membrane as a helical segment. The Extracellular portion of the chain corresponds to S61–S87. N73 is a glycosylation site (N-linked (GlcNAc...) asparagine). Residues W88–I108 traverse the membrane as a helical segment. The Cytoplasmic portion of the chain corresponds to E109–T120. A helical transmembrane segment spans residues A121–L141. Residues A142–A145 are Extracellular-facing. The chain crosses the membrane as a helical span at residues L146 to V166. Topologically, residues Q167–R171 are cytoplasmic. The helical transmembrane segment at G172–A192 threads the bilayer. Over G193–S199 the chain is Extracellular. Residue N197 is glycosylated (N-linked (GlcNAc...) asparagine). Residues G200 to P220 traverse the membrane as a helical segment. Topologically, residues E221–P283 are cytoplasmic. A helical transmembrane segment spans residues L284–F304. Residues Y305–N320 are Extracellular-facing. A helical transmembrane segment spans residues L321–I341. The Cytoplasmic segment spans residues D342–K347. The helical transmembrane segment at I348–F368 threads the bilayer. Residues Y369–S387 lie on the Extracellular side of the membrane. The chain crosses the membrane as a helical span at residues F388 to G408. Over E409–T424 the chain is Cytoplasmic. The chain crosses the membrane as a helical span at residues G425–I445. Topologically, residues G446 to H448 are extracellular. The helical transmembrane segment at G449–V469 threads the bilayer. Residues P470 to M504 are Cytoplasmic-facing.

Belongs to the major facilitator superfamily. Sugar transporter (TC 2.A.1.1) family. Trehalose transporter subfamily. In terms of tissue distribution, highest expression in the fat body. Not expressed in other tissues including the midgut, muscle, and integuments after 24 hours of dehydration.

It is found in the cell membrane. In terms of biological role, high-capacity facilitative transporter for trehalose, required to induce anhydrobiosis. Anhydrobiotic larvae can survive almost complete dehydration. Does not transport maltose, sucrose or lactose. Mediates the bidirectional transfer of trehalose. Responsible for the transport of trehalose synthesized in the fat body and the incorporation of trehalose into other tissues that require a carbon source, thereby regulating trehalose levels in the hemolymph. The polypeptide is Facilitated trehalose transporter Tret1 (Polypedilum vanderplanki (Sleeping chironomid midge)).